The chain runs to 365 residues: NAD(P)H-quinone oxidoreductase subunit 1, chloroplastic (365 aa).

6 helical membrane-spanning segments follow: residues 29-49 (IWLLVPIFTLILVIIIGVLVI), 106-126 (IAVISTLLSYLVIPFGYHLVL), 129-149 (LSIGVFLWIAISSIAPIGLLM), 250-270 (YSGIKFGLFYVASYLNLLVSS), 302-322 (IFGMTIGILITLAKAYLFLFI), and 338-358 (LLNLGWKFLLPISLGNLLLTT).

The protein belongs to the complex I subunit 1 family. NDH is composed of at least 16 different subunits, 5 of which are encoded in the nucleus.

It localises to the plastid. The protein localises to the chloroplast thylakoid membrane. The catalysed reaction is a plastoquinone + NADH + (n+1) H(+)(in) = a plastoquinol + NAD(+) + n H(+)(out). It catalyses the reaction a plastoquinone + NADPH + (n+1) H(+)(in) = a plastoquinol + NADP(+) + n H(+)(out). Its function is as follows. NDH shuttles electrons from NAD(P)H:plastoquinone, via FMN and iron-sulfur (Fe-S) centers, to quinones in the photosynthetic chain and possibly in a chloroplast respiratory chain. The immediate electron acceptor for the enzyme in this species is believed to be plastoquinone. Couples the redox reaction to proton translocation, and thus conserves the redox energy in a proton gradient. The chain is NAD(P)H-quinone oxidoreductase subunit 1, chloroplastic from Acorus calamus (Sweet flag).